Here is a 296-residue protein sequence, read N- to C-terminus: NAD kinase (296 aa).

D73 serves as the catalytic Proton acceptor. Residues D73–G74, K78, N151–E152, R178, D180, and T191–S196 each bind NAD(+).

It belongs to the NAD kinase family. A divalent metal cation serves as cofactor.

It is found in the cytoplasm. The enzyme catalyses NAD(+) + ATP = ADP + NADP(+) + H(+). Its function is as follows. Involved in the regulation of the intracellular balance of NAD and NADP, and is a key enzyme in the biosynthesis of NADP. Catalyzes specifically the phosphorylation on 2'-hydroxyl of the adenosine moiety of NAD to yield NADP. The sequence is that of NAD kinase from Francisella tularensis subsp. tularensis (strain FSC 198).